The primary structure comprises 185 residues: Ribosome-recycling factor (185 aa).

This sequence belongs to the RRF family.

It is found in the cytoplasm. Responsible for the release of ribosomes from messenger RNA at the termination of protein biosynthesis. May increase the efficiency of translation by recycling ribosomes from one round of translation to another. This Desulfatibacillum aliphaticivorans protein is Ribosome-recycling factor.